We begin with the raw amino-acid sequence, 77 residues long: Defensin-like protein 1 (77 aa).

An N-terminal signal peptide occupies residues 1-30 (MKLSVRFISAALLLFMVFIATGMGPVTVEA). Cystine bridges form between Cys-33–Cys-77, Cys-44–Cys-64, Cys-50–Cys-71, and Cys-54–Cys-73.

It belongs to the DEFL family. Expressed in the whole plant except roots.

The protein resides in the secreted. Its function is as follows. Confers broad-spectrum resistance to pathogens. In Arabidopsis thaliana (Mouse-ear cress), this protein is Defensin-like protein 1 (PDF2.3).